Reading from the N-terminus, the 222-residue chain is Probable pyridoxal 5'-phosphate synthase subunit SNO3 (222 aa).

58–60 contacts L-glutamine; it reads GES. Catalysis depends on Cys-91, which acts as the Nucleophile. L-glutamine contacts are provided by residues Arg-120 and 151-152; that span reads IR. Residues His-197 and Glu-199 each act as charge relay system in the active site.

The protein belongs to the glutaminase PdxT/SNO family.

The enzyme catalyses aldehydo-D-ribose 5-phosphate + D-glyceraldehyde 3-phosphate + L-glutamine = pyridoxal 5'-phosphate + L-glutamate + phosphate + 3 H2O + H(+). It carries out the reaction L-glutamine + H2O = L-glutamate + NH4(+). The protein operates within cofactor biosynthesis; pyridoxal 5'-phosphate biosynthesis. In terms of biological role, catalyzes the hydrolysis of glutamine to glutamate and ammonia as part of the biosynthesis of pyridoxal 5'-phosphate. The resulting ammonia molecule is channeled to the active site of a SNZ isoform. The sequence is that of Probable pyridoxal 5'-phosphate synthase subunit SNO3 (SNO3) from Saccharomyces cerevisiae (strain ATCC 204508 / S288c) (Baker's yeast).